The chain runs to 108 residues: Nucleoid-associated protein BQ02190 (108 aa).

The protein belongs to the YbaB/EbfC family. In terms of assembly, homodimer.

Its subcellular location is the cytoplasm. The protein localises to the nucleoid. Its function is as follows. Binds to DNA and alters its conformation. May be involved in regulation of gene expression, nucleoid organization and DNA protection. This is Nucleoid-associated protein BQ02190 from Bartonella quintana (strain Toulouse) (Rochalimaea quintana).